A 481-amino-acid polypeptide reads, in one-letter code: MTIFELSKEGRKAYNLPKNNIKDYGFDFPNHLMRGKEPRLPQVSELDIVRHYTNLAAKNYAVDVGFYPLGSCTMKYNPKINEKLASLEGFTMIHPCQPREVTQGALQLMYELKEMLCEISGMDDMTLIPSAGAHGELTGMLIARAYHLSRGDTKRKKAIVPDSAHGTNPASAMMAGFEVVELKSGKDGRIDLEELEKHLDDEVAVLLLTNPNTLGLFEKDIIKIAETVHKHGALLYYDGANLNAILGRTRPGDMGFDIVHLNLHKTFSTPHGMGGPGSGPVGVKKHLAKFLPIPEIIKESDVYKFNYNKSESIGFIRSFYGNFSVLVRAYVYIKTMGNDGLKKVGQMAVLNANYLRKKVSKIMDIAYPDMCMHEFVATCEKLTKETGVKALDIAKRLLDYGIHAPTMYFPLIVHEDFMIEPTETESKDTLDEFTKILEKIFIEAKENPELVKNAPYTTPVRRLDEASASRKPIVKYNFEEE.

At lysine 265 the chain carries N6-(pyridoxal phosphate)lysine.

It belongs to the GcvP family. C-terminal subunit subfamily. As to quaternary structure, the glycine cleavage system is composed of four proteins: P, T, L and H. In this organism, the P 'protein' is a heterodimer of two subunits. Pyridoxal 5'-phosphate serves as cofactor.

The enzyme catalyses N(6)-[(R)-lipoyl]-L-lysyl-[glycine-cleavage complex H protein] + glycine + H(+) = N(6)-[(R)-S(8)-aminomethyldihydrolipoyl]-L-lysyl-[glycine-cleavage complex H protein] + CO2. In terms of biological role, the glycine cleavage system catalyzes the degradation of glycine. The P protein binds the alpha-amino group of glycine through its pyridoxal phosphate cofactor; CO(2) is released and the remaining methylamine moiety is then transferred to the lipoamide cofactor of the H protein. The chain is Probable glycine dehydrogenase (decarboxylating) subunit 2 from Thermosipho melanesiensis (strain DSM 12029 / CIP 104789 / BI429).